A 347-amino-acid polypeptide reads, in one-letter code: WAT1-related protein At4g15540 (347 aa).

10 consecutive transmembrane segments (helical) span residues 15 to 35 (VVPF…SILY), 47 to 67 (VFVF…SLIF), 73 to 93 (LPTA…LGLT), 108 to 128 (TLSS…AIFF), 139 to 159 (ATQA…VIVL), 178 to 198 (WIIG…WFIL), 210 to 230 (IAVV…VCLL), 243 to 263 (GFSL…GSVI), 276 to 296 (ISLF…IFLG), and 299 to 319 (LHLG…TVIW). The region spanning 30–158 (GSSILYKAAT…VSISGALVIV (129 aa)) is the EamA 1 domain. Residues 216–317 (YNLCATLISG…VILSFGFYTV (102 aa)) enclose the EamA 2 domain.

Belongs to the drug/metabolite transporter (DMT) superfamily. Plant drug/metabolite exporter (P-DME) (TC 2.A.7.4) family.

It is found in the membrane. This Arabidopsis thaliana (Mouse-ear cress) protein is WAT1-related protein At4g15540.